The chain runs to 219 residues: Ribose-5-phosphate isomerase A (219 aa).

Residues 28–31 (SGST), 81–84 (DGAD), and 94–97 (KGGG) each bind substrate. Glu103 serves as the catalytic Proton acceptor. Position 121 (Lys121) interacts with substrate.

The protein belongs to the ribose 5-phosphate isomerase family. Homodimer.

It catalyses the reaction aldehydo-D-ribose 5-phosphate = D-ribulose 5-phosphate. It functions in the pathway carbohydrate degradation; pentose phosphate pathway; D-ribose 5-phosphate from D-ribulose 5-phosphate (non-oxidative stage): step 1/1. Catalyzes the reversible conversion of ribose-5-phosphate to ribulose 5-phosphate. This Actinobacillus succinogenes (strain ATCC 55618 / DSM 22257 / CCUG 43843 / 130Z) protein is Ribose-5-phosphate isomerase A.